Reading from the N-terminus, the 109-residue chain is U4-lycotoxin-Ls1c (109 aa).

Residues 1 to 22 (MKVLVLFSVLFLTLFSYSSTEA) form the signal peptide. Positions 23–44 (IDEFDSDAEDDMLSLMANEQVR) are excised as a propeptide. Residues 45–88 (AKACTPRLHDCSHDRHSCCRGELFKDVCYCFYPEGEDITEVCSC) form a knottin domain region. Cystine bridges form between C48-C63, C55-C72, C62-C88, and C74-C86. The tract at residues 89-108 (QQPKSHKYIEKVVDKAKTVV) is linear cationic cytotoxin domain.

It belongs to the neurotoxin 19 (CSTX) family. 05 (U4-Lctx) subfamily. Expressed by the venom gland.

The protein localises to the secreted. In terms of biological role, enhances the high-affinity desensitization of human P2RX3 purinoceptors. This Lycosa singoriensis (Wolf spider) protein is U4-lycotoxin-Ls1c.